The primary structure comprises 290 residues: GTPase Era (290 aa).

The Era-type G domain occupies 2–169 (KSGFVSIIGR…KDKIYENLNE (168 aa)). Residues 10-17 (GRPSTGKS) form a G1 region. 10 to 17 (GRPSTGKS) is a GTP binding site. Residues 36-40 (QTTRN) form a G2 region. Positions 57-60 (DTPG) are G3. Residues 57–61 (DTPGF) and 119–122 (NKID) contribute to the GTP site. The interval 119 to 122 (NKID) is G4. The segment at 148-150 (ISA) is G5. Residues 200–276 (LKEELPYSIY…NLFLQVKLRK (77 aa)) enclose the KH type-2 domain.

Belongs to the TRAFAC class TrmE-Era-EngA-EngB-Septin-like GTPase superfamily. Era GTPase family. As to quaternary structure, monomer.

Its subcellular location is the cytoplasm. It localises to the cell inner membrane. An essential GTPase that binds both GDP and GTP, with rapid nucleotide exchange. Plays a role in 16S rRNA processing and 30S ribosomal subunit biogenesis and possibly also in cell cycle regulation and energy metabolism. This Borrelia duttonii (strain Ly) protein is GTPase Era.